A 56-amino-acid chain; its full sequence is U-megalopygitoxin(2)-Mo9 (56 aa).

A signal peptide spans 1–25 (MKFIVLLLIVTSVLMMFAVTTEASP). Gln-26 is subject to Pyrrolidone carboxylic acid. The residue at position 55 (Thr-55) is a Threonine amide.

This sequence belongs to the caterpillar 2 family. Post-translationally, contains 2 disulfide bonds. In terms of tissue distribution, expressed by the venom apparatus.

It localises to the secreted. Functionally, probable toxin. The protein is U-megalopygitoxin(2)-Mo9 of Megalopyge opercularis (Southern flannel moth).